Consider the following 497-residue polypeptide: Zinc finger protein 3 (497 aa).

The segment covering 1–20 (MGTEKKEGLPKEETSEDSKP) has biased composition (basic and acidic residues). The tract at residues 1 to 53 (MGTEKKEGLPKEETSEDSKPHGQTVEKLAQEVCHGHEFGEASEEDMSEGHLRE) is disordered. Residues K6 and K11 each participate in a glycyl lysine isopeptide (Lys-Gly) (interchain with G-Cter in SUMO2) cross-link. C2H2-type zinc fingers lie at residues 136-158 (HTCKECGKAFNQNSHLIQHMRVH), 164-186 (FECKECGKTFGTNSSLRRHQRIH), 192-214 (FACTECGKAFIQSSHLIHHHRIH), 220-242 (YKCEECGKAFSQNSALILHQRIH), 248-270 (YECNECGKTFRVSSQLIQHQRIH), 276-298 (HECSECGKAFKHSSGLIRHQKIH), 304-326 (YLCNECGKGFGQSSELIRHQRIH), 332-354 (YECSECGKTFGQNSEIIRHIRIH), 360-382 (YVCKECGKAFRGNSELLRHERIH), 388-410 (YECFECGKAFRRTSHLIVHQRIH), 416-438 (HQCNECARTFWDNSELLLHQKIH), 444-466 (YECSECEKTFSQHSQLTIHQRIH), and 472-494 (YECQECQKTFSRSSHLLRHQSVH).

Belongs to the krueppel C2H2-type zinc-finger protein family.

Its subcellular location is the nucleus. Its function is as follows. May be involved in transcriptional regulation. The chain is Zinc finger protein 3 (Zfp3) from Mus musculus (Mouse).